A 291-amino-acid polypeptide reads, in one-letter code: ATP synthase gamma chain (291 aa).

It belongs to the ATPase gamma chain family. F-type ATPases have 2 components, CF(1) - the catalytic core - and CF(0) - the membrane proton channel. CF(1) has five subunits: alpha(3), beta(3), gamma(1), delta(1), epsilon(1). CF(0) has three main subunits: a, b and c.

It localises to the cell inner membrane. Functionally, produces ATP from ADP in the presence of a proton gradient across the membrane. The gamma chain is believed to be important in regulating ATPase activity and the flow of protons through the CF(0) complex. The protein is ATP synthase gamma chain of Rhodopseudomonas palustris (strain ATCC BAA-98 / CGA009).